A 772-amino-acid polypeptide reads, in one-letter code: Carnitine O-palmitoyltransferase 1, muscle isoform (772 aa).

At 1 to 47 (MAEAHQAVAFQFTVTPDGVDFRLSREALRHIYLSGINSWKKRLIRIK) the chain is on the cytoplasmic side. Residues 48-73 (NGILRGVYPGSPTSWLVVVMATVGSN) traverse the membrane as a helical segment. Residues 74-102 (YCKVDISMGLVHCIQRCLPTRYGSYGTPQ) are Mitochondrial intermembrane-facing. A helical membrane pass occupies residues 103 to 122 (TETLLSMVIFSTGVWATGIF). The Cytoplasmic portion of the chain corresponds to 123–772 (LFRQTLKLLL…DLFKISKTDS (650 aa)). His473 functions as the Proton acceptor in the catalytic mechanism. Residue 555–567 (GKGLIKKCRTSPD) participates in CoA binding. 2 residues coordinate (R)-carnitine: Tyr589 and Thr602.

This sequence belongs to the carnitine/choline acetyltransferase family. As to expression, high expression in heart, skeletal muscle and brown adipose tissue. Also expressed in white adipose tissue, but not in liver.

The protein localises to the mitochondrion outer membrane. The enzyme catalyses (R)-carnitine + hexadecanoyl-CoA = O-hexadecanoyl-(R)-carnitine + CoA. It participates in lipid metabolism; fatty acid beta-oxidation. In terms of biological role, catalyzes the transfer of the acyl group of long-chain fatty acid-CoA conjugates onto carnitine, an essential step for the mitochondrial uptake of long-chain fatty acids and their subsequent beta-oxidation in the mitochondrion. This is Carnitine O-palmitoyltransferase 1, muscle isoform (Cpt1b) from Rattus norvegicus (Rat).